The following is a 293-amino-acid chain: Meteorin (293 aa).

A signal peptide spans 1–23 (MGFPAAALLCALCCGLLAPAARA). 5 cysteine pairs are disulfide-bonded: C30–C51, C82–C118, C171–C242, C174–C266, and C184–C288.

The protein belongs to the meteorin family. Monomer.

The protein resides in the secreted. Functionally, involved in both glial cell differentiation and axonal network formation during neurogenesis. Promotes astrocyte differentiation and transforms cerebellar astrocytes into radial glia. Also induces axonal extension in small and intermediate neurons of sensory ganglia by activating nearby satellite glia. The sequence is that of Meteorin (METRN) from Homo sapiens (Human).